The following is a 568-amino-acid chain: SLAIN motif-containing protein 1 (568 aa).

5 disordered regions span residues 1-22 (MMAE…SGPV), 59-92 (LLLL…TAAA), 139-162 (GGGP…SPPP), 235-256 (YTSR…STSE), and 291-403 (STSA…LRRS). Residues 21–56 (PVVNAELEVKKLQELVRKLEKQNEQLRSRAASAAAA) adopt a coiled-coil conformation. Residues 62–74 (LPPPPPAAPPPAG) show a composition bias toward pro residues. Positions 75–92 (LQPLGPRSPPAATATAAA) are enriched in low complexity. Gly residues predominate over residues 139 to 149 (GGGPEPGGAGT). Polar residues predominate over residues 235–245 (YTSRGSPLSPQ). A Phosphoserine modification is found at Ser-243. Low complexity-rich tracts occupy residues 246-255 (SSIDSELSTS) and 291-307 (STSA…SLSS). The segment covering 316-329 (QEYDQYSLEDEEEF) has biased composition (acidic residues). Over residues 366–384 (SSQYFPSNNYQQQQYYSPQ) the composition is skewed to low complexity. A compositionally biased stretch (polar residues) spans 385–395 (AQTPDQQPNRT). An asymmetric dimethylarginine mark is found at Arg-471 and Arg-543.

The protein belongs to the SLAIN motif-containing family. As to quaternary structure, interacts with MAPRE1, MAPRE2, MAPRE3 and CKAP5. Interacts with ZDHHC17 (via ANK repeats). Expressed in embryonic stem cells. Expressed in brain.

Its subcellular location is the cytoplasm. It localises to the cytoskeleton. Functionally, microtubule plus-end tracking protein that might be involved in the regulation of cytoplasmic microtubule dynamics, microtubule organization and microtubule elongation. The chain is SLAIN motif-containing protein 1 (SLAIN1) from Homo sapiens (Human).